The chain runs to 173 residues: Translocon-associated protein subunit delta (173 aa).

The first 23 residues, 1–23 (MAAMASLGALALLLLSSLSRCSA), serve as a signal peptide directing secretion. Over 24–144 (EACLEPQITP…SVDHRGTWNG (121 aa)) the chain is Lumenal. An intrachain disulfide couples C26 to C57. K73 participates in a covalent cross-link: Glycyl lysine isopeptide (Lys-Gly) (interchain with G-Cter in ubiquitin). Residues 145–165 (PWVSTEVLAAAIGLVIYYLAF) traverse the membrane as a helical segment. Topologically, residues 166 to 173 (SAKSHIQA) are cytoplasmic.

The protein belongs to the TRAP-delta family. In terms of assembly, heterotetramer of TRAP-alpha, TRAP-beta, TRAP-delta and TRAP-gamma.

Its subcellular location is the endoplasmic reticulum membrane. In terms of biological role, TRAP proteins are part of a complex whose function is to bind calcium to the ER membrane and thereby regulate the retention of ER resident proteins. The protein is Translocon-associated protein subunit delta (SSR4) of Homo sapiens (Human).